We begin with the raw amino-acid sequence, 427 residues long: Probable glucuronosyltransferase Os03g0107900 (427 aa).

At 1–33 the chain is on the cytoplasmic side; the sequence is MAMRGDPKQRRASASAPHGGAAHHVADKLRRHS. Residues 34–54 traverse the membrane as a helical; Signal-anchor for type II membrane protein segment; sequence TFLLLLLLLWFALSLYLFLSA. At 55–427 the chain is on the lumenal side; it reads TPPPPRPAFL…QRRHVESWKR (373 aa). Residues Asn136, Asn168, Asn264, and Asn374 are each glycosylated (N-linked (GlcNAc...) asparagine).

The protein belongs to the glycosyltransferase 47 family.

Its subcellular location is the golgi apparatus membrane. Involved in the synthesis of glucuronoxylan hemicellulose in secondary cell walls. This is Probable glucuronosyltransferase Os03g0107900 from Oryza sativa subsp. japonica (Rice).